The following is a 102-amino-acid chain: Large ribosomal subunit protein uL24 (102 aa).

The protein belongs to the universal ribosomal protein uL24 family. Part of the 50S ribosomal subunit.

In terms of biological role, one of two assembly initiator proteins, it binds directly to the 5'-end of the 23S rRNA, where it nucleates assembly of the 50S subunit. One of the proteins that surrounds the polypeptide exit tunnel on the outside of the subunit. The polypeptide is Large ribosomal subunit protein uL24 (Leuconostoc citreum (strain KM20)).